Consider the following 390-residue polypeptide: MRKMLAAVSRVLSGASQKPASRVLVASRNFANDATFEIKKCDLHRLEEGPPVTTVLTREDGLKYYRMMQTVRRMELKADQLYKQKIIRGFCHLCDGQEACCVGLEAGINPTDHLITAYRAHGFTFTRGLSVREILAELTGRKGGCAKGKGGSTHMYAKNFYRGNGIVGAQVPLGAGIALACKYNGKDEVCLTLYGDGAADQGQIFEAYNMAALWKLPCIFICENNRYGMGTSVERAAASTDYYKRGDFIPGLRVDGMDILCVREATRFAAAYCRSGKGPILMELQTYRYHGHSMSDPGVSYRTREEIQEVRSKSDPIMLLKDRMVNSNLASVEELKEIDVEVRKEIEDAAQFATADPEPPLEELGYHIYSSDPPFEVRGANQWIKFKSVS.

The N-terminal 29 residues, 1 to 29 (MRKMLAAVSRVLSGASQKPASRVLVASRN), are a transit peptide targeting the mitochondrion. Residue Lys-63 is modified to N6-acetyllysine; alternate. Lys-63 bears the N6-succinyllysine; alternate mark. Pyruvate-binding residues include His-92, Tyr-118, Arg-119, Ala-157, Gly-165, Val-167, Asp-196, Gly-197, Ala-198, Asn-225, and Tyr-227. Residues Tyr-118 and Arg-119 each contribute to the thiamine diphosphate site. Thiamine diphosphate-binding residues include Gly-165, Val-167, Asp-196, Gly-197, Ala-198, and Asn-225. Residue Asp-196 coordinates Mg(2+). Positions 225 and 227 each coordinate Mg(2+). Ser-232 is modified (phosphoserine; by PDK1). Lys-244 carries the post-translational modification N6-acetyllysine; alternate. Lys-244 bears the N6-succinyllysine; alternate mark. Lys-277 is subject to N6-succinyllysine. His-292 serves as a coordination point for thiamine diphosphate. Ser-293 is subject to Phosphoserine; by PDK1, PDK2, PDK3 and PDK4. A Phosphoserine modification is found at Ser-295. A Phosphoserine; by PDK1, PDK2, PDK3 and PDK4 modification is found at Ser-300. A Phosphotyrosine modification is found at Tyr-301. At Lys-313 the chain carries N6-acetyllysine; alternate. Lys-313 bears the N6-succinyllysine; alternate mark. Lys-321 and Lys-336 each carry N6-acetyllysine. Lys-385 carries the N6-succinyllysine modification.

As to quaternary structure, heterotetramer of two PDHA1 and two PDHB subunits. The heterotetramer interacts with DLAT, and is part of the multimeric pyruvate dehydrogenase complex that contains multiple copies of pyruvate dehydrogenase (E1), dihydrolipoamide acetyltransferase (DLAT, E2) and lipoamide dehydrogenase (DLD, E3). These subunits are bound to an inner core composed of about 48 DLAT and 12 PDHX molecules. The cofactor is thiamine diphosphate. Mg(2+) is required as a cofactor. Post-translationally, phosphorylation at Ser-232, Ser-293 and Ser-300 by PDK family kinases inactivates the enzyme; for this phosphorylation at a single site is sufficient. Phosphorylation at Ser-293 interferes with access to active site, and thereby inactivates the enzyme. Dephosphorylation at all three sites, i.e. at Ser-232, Ser-293 and Ser-300, is required for reactivation. In terms of processing, acetylation alters the phosphorylation pattern. Deacetylated by SIRT3.

The protein localises to the mitochondrion matrix. The catalysed reaction is N(6)-[(R)-lipoyl]-L-lysyl-[protein] + pyruvate + H(+) = N(6)-[(R)-S(8)-acetyldihydrolipoyl]-L-lysyl-[protein] + CO2. Pyruvate dehydrogenase activity is inhibited by phosphorylation of PDHA1; it is reactivated by dephosphorylation. The pyruvate dehydrogenase complex catalyzes the overall conversion of pyruvate to acetyl-CoA and CO(2), and thereby links the glycolytic pathway to the tricarboxylic cycle. This Macaca fascicularis (Crab-eating macaque) protein is Pyruvate dehydrogenase E1 component subunit alpha, somatic form, mitochondrial (PDHA1).